A 163-amino-acid polypeptide reads, in one-letter code: Iron-sulfur cluster assembly protein 2 (163 aa).

Residues 1–48 (MMMLRQTSRKAYLGLQASPLGLGRRLYHENVIDHFENPRNVGSFNRND) constitute a mitochondrion transit peptide.

The protein belongs to the NifU family. In terms of assembly, component of the core Fe-S cluster (ISC) assembly machinery. It depends on [2Fe-2S] cluster as a cofactor. In terms of tissue distribution, mostly expressed in leaves, pollen and flowers.

It localises to the mitochondrion matrix. Its pathway is cofactor biosynthesis; iron-sulfur cluster biosynthesis. Scaffold protein for the de novo synthesis of iron-sulfur (Fe-S) clusters within mitochondria, which is required for maturation of both mitochondrial and cytoplasmic [2Fe-2S] and [4Fe-4S] proteins. First, a [2Fe-2S] cluster is transiently assembled on the scaffold protein ISCU (ISU1, ISU2 or ISU3). In a second step, the cluster is released from ISCU, transferred to a glutaredoxin, followed by the formation of mitochondrial [2Fe-2S] proteins, the synthesis of [4Fe-4S] clusters and their target-specific insertion into the recipient apoproteins. Cluster assembly on ISCU depends on the function of the cysteine desulfurase complex NFS1-ISD11, which serves as the sulfur donor for cluster synthesis, the iron-binding protein frataxin as the putative iron donor, and the electron transfer chain comprised of ferredoxin reductase and ferredoxin, which receive their electrons from NADH. This is Iron-sulfur cluster assembly protein 2 (ISU2) from Arabidopsis thaliana (Mouse-ear cress).